The following is a 429-amino-acid chain: Transcriptional adapter 3 (429 aa).

The stretch at 41-70 (IEELDTLQLELETLLSSASRRLRALEEQRQ) forms a coiled coil. Disordered stretches follow at residues 86–132 (KLEK…TKVQ), 208–257 (EERR…PFGP), and 274–308 (PMEDSPIPDIPGKDDGAGTSPRSQGKAFSVPHTRS). Composition is skewed to basic and acidic residues over residues 208-221 (EERREGARANDKKK) and 230-249 (LDAKDVDALLKKSESQHEPP). Residues 364-404 (LLKLAREEMRKQELRQRVRVADNEVMEAFRRIMAARQKKRT) are a coiled coil.

This sequence belongs to the NGG1 family.

The protein resides in the nucleus. In terms of biological role, functions as a component of the PCAF complex. The PCAF complex is capable of efficiently acetylating histones in a nucleosomal context. In Danio rerio (Zebrafish), this protein is Transcriptional adapter 3 (tada3).